Here is a 379-residue protein sequence, read N- to C-terminus: Glutamate 5-kinase (379 aa).

Lysine 19 contributes to the ATP binding site. Residues serine 59, aspartate 146, and asparagine 158 each contribute to the substrate site. ATP is bound at residue 178 to 179; that stretch reads TD. Positions 285-363 constitute a PUA domain; that stretch reads RGAVTVDAGA…SEFERLLGYV (79 aa).

Belongs to the glutamate 5-kinase family.

Its subcellular location is the cytoplasm. It carries out the reaction L-glutamate + ATP = L-glutamyl 5-phosphate + ADP. It participates in amino-acid biosynthesis; L-proline biosynthesis; L-glutamate 5-semialdehyde from L-glutamate: step 1/2. Catalyzes the transfer of a phosphate group to glutamate to form L-glutamate 5-phosphate. This Variovorax paradoxus (strain S110) protein is Glutamate 5-kinase.